A 189-amino-acid polypeptide reads, in one-letter code: Peptidyl-tRNA hydrolase (189 aa).

Tyr-14 provides a ligand contact to tRNA. His-19 serves as the catalytic Proton acceptor. TRNA-binding residues include Tyr-64, Asn-66, and Asn-112.

The protein belongs to the PTH family. In terms of assembly, monomer.

It localises to the cytoplasm. It carries out the reaction an N-acyl-L-alpha-aminoacyl-tRNA + H2O = an N-acyl-L-amino acid + a tRNA + H(+). Functionally, hydrolyzes ribosome-free peptidyl-tRNAs (with 1 or more amino acids incorporated), which drop off the ribosome during protein synthesis, or as a result of ribosome stalling. In terms of biological role, catalyzes the release of premature peptidyl moieties from peptidyl-tRNA molecules trapped in stalled 50S ribosomal subunits, and thus maintains levels of free tRNAs and 50S ribosomes. This chain is Peptidyl-tRNA hydrolase, found in Dehalococcoides mccartyi (strain ATCC BAA-2266 / KCTC 15142 / 195) (Dehalococcoides ethenogenes (strain 195)).